We begin with the raw amino-acid sequence, 273 residues long: MNLRAAGPGWLFCPADRPERFAKAAAAADVVILDLEDGVAEAQKPAARNALRDTPLDPERTVVRINAGGTADQARDLEALAGTAYTTVMLPKAESAAQVIELAPRDVIALVETARGAVCAAEIAAADPTVGMMWGAEDLIATLGGSSSRRADGAYRDVARHVRSTILLAASAFGRLALDAVHLDILDVEGLQEEARDAAAVGFDVTVCIHPSQIPVVRKAYRPSHEKLAWARRVLAASRSERGAFAFEGQMVDSPVLTHAETMLRRAGEATSE.

The substrate site is built by R64 and E112. Residues E112 and D138 each contribute to the Mg(2+) site.

It belongs to the HpcH/HpaI aldolase family. Citrate lyase beta subunit-like subfamily. In terms of assembly, homotrimer. The cofactor is Mg(2+).

In terms of biological role, may play a role in fatty acid biosynthesis. The polypeptide is Citrate lyase subunit beta-like protein (citE) (Mycobacterium tuberculosis (strain CDC 1551 / Oshkosh)).